The chain runs to 30 residues: NADH-ubiquinone oxidoreductase chain 5 (30 aa).

A helical membrane pass occupies residues 7 to 27; sequence NIIIIINSSLIIILFSSIFFF.

The protein belongs to the complex I subunit 5 family.

Its subcellular location is the mitochondrion inner membrane. It catalyses the reaction a ubiquinone + NADH + 5 H(+)(in) = a ubiquinol + NAD(+) + 4 H(+)(out). Functionally, core subunit of the mitochondrial membrane respiratory chain NADH dehydrogenase (Complex I) that is believed to belong to the minimal assembly required for catalysis. Complex I functions in the transfer of electrons from NADH to the respiratory chain. The immediate electron acceptor for the enzyme is believed to be ubiquinone. This is NADH-ubiquinone oxidoreductase chain 5 (ND5) from Pisaster ochraceus (Ochre sea star).